The sequence spans 97 residues: Co-chaperonin GroES (97 aa).

The protein belongs to the GroES chaperonin family. Heptamer of 7 subunits arranged in a ring. Interacts with the chaperonin GroEL.

It is found in the cytoplasm. Functionally, together with the chaperonin GroEL, plays an essential role in assisting protein folding. The GroEL-GroES system forms a nano-cage that allows encapsulation of the non-native substrate proteins and provides a physical environment optimized to promote and accelerate protein folding. GroES binds to the apical surface of the GroEL ring, thereby capping the opening of the GroEL channel. This is Co-chaperonin GroES from Pseudomonas putida (strain W619).